The chain runs to 179 residues: Fimbrial subunit ElfA (179 aa).

Residues 1–21 (MKKSVLTAFITVVCATSSVMA) form the signal peptide.

It belongs to the fimbrial protein family.

Its subcellular location is the fimbrium. Its function is as follows. Part of the elfADCG-ycbUVF fimbrial operon, which promotes adhesion of bacteria to different abiotic surfaces. ElfA is the major fimbrial subunit produced by this operon. The sequence is that of Fimbrial subunit ElfA (elfA) from Escherichia coli (strain K12).